A 313-amino-acid polypeptide reads, in one-letter code: 4-diphosphocytidyl-2-C-methyl-D-erythritol kinase (313 aa).

Lys29 is an active-site residue. ATP is bound at residue 113 to 123 (PMGGGVGGGSS). The active site involves Asp155.

This sequence belongs to the GHMP kinase family. IspE subfamily.

It catalyses the reaction 4-CDP-2-C-methyl-D-erythritol + ATP = 4-CDP-2-C-methyl-D-erythritol 2-phosphate + ADP + H(+). It functions in the pathway isoprenoid biosynthesis; isopentenyl diphosphate biosynthesis via DXP pathway; isopentenyl diphosphate from 1-deoxy-D-xylulose 5-phosphate: step 3/6. Its function is as follows. Catalyzes the phosphorylation of the position 2 hydroxy group of 4-diphosphocytidyl-2C-methyl-D-erythritol. This Haemophilus influenzae (strain ATCC 51907 / DSM 11121 / KW20 / Rd) protein is 4-diphosphocytidyl-2-C-methyl-D-erythritol kinase.